The chain runs to 706 residues: MYNSIYGSPFPKINPKVRYKTALERAGFDTKPRNPFSSQRNASTGSLQASVKSPPITRQRNVSAAPSVPVTMKSAYTASSKSAYSSVKGESDIYPPPVLENSERRSVTPPKNSNFTSSRPSDISRSISRPSERASQEDPFRFERDLDRQAEQYAASRHTCKSPANKEFQAADNFPFNFEQEDAGNTEREQDLSPIERSFMMLTQNDTASVVNSMNQTDNRGVLDQKLGKEQQKEESSIEYESEGQQEDENDIESLNFEPDPKLQMNLENEPLQDDFPEAKQEEKNTEPKIPEINVTRESNTPSLTMNALDSKIYPDDNFSGLESSKEQKSPGVSSSSTKVEDLSLDGLNEKRLSITSSENVETPYTATNLQVEQLIAQLDDVSLSRNAKLDMNGNCLNAVDRKASRFKKSSAYLSGYPSMDIPVTQQTSIVQNSNTNLSRQTILVDKGDVDEDAPSESTTNGGTPIFYKFKQSNVEYSNNEGMGSQETFRTKLPTIEALQLQHKRNITDLREEIDNSKSNDSHVLPNGGTTRYSSDADYKETEPIEFKYPPGEGPCRACGLEVTGKRMFSKKENELSGQWHRECFKCIECGIKFNKHVPCYILGDEPYCQKHYHEENHSICKVCSNFIEGECLENDKVERFHVDCLNCFLCKTAITNDYYIFNGEIPLCGNHDMEALLKEGIDNATSSNDKNNTLSKRRTRLINFN.

Disordered stretches follow at residues 24–192, 222–258, 279–341, and 514–537; these read ERAG…EQDL, VLDQKLGKEQQKEESSIEYESEGQQEDENDIESLNFE, AKQE…TKVE, and IDNSKSNDSHVLPNGGTTRYSSDA. Residues 35 to 64 show a composition bias toward polar residues; the sequence is PFSSQRNASTGSLQASVKSPPITRQRNVSA. Ser43 and Ser63 each carry phosphoserine. Composition is skewed to low complexity over residues 73-86 and 117-129; these read KSAYTASSKSAYSS and SSRPSDISRSISR. 2 stretches are compositionally biased toward basic and acidic residues: residues 130 to 150 and 222 to 236; these read PSERASQEDPFRFERDLDRQA and VLDQKLGKEQQKEES. The segment covering 237–252 has biased composition (acidic residues); that stretch reads SIEYESEGQQEDENDI. A compositionally biased stretch (basic and acidic residues) spans 279 to 290; sequence AKQEEKNTEPKI. The span at 296 to 308 shows a compositional bias: polar residues; it reads TRESNTPSLTMNA. 2 consecutive LIM zinc-binding domains span residues 556–612 and 621–672; these read CRAC…CQKH and CKVC…CGNH.

In Saccharomyces cerevisiae (strain ATCC 204508 / S288c) (Baker's yeast), this protein is Paxillin-like protein 1 (PXL1).